The following is a 424-amino-acid chain: UDP-N-acetylglucosamine 1-carboxyvinyltransferase (424 aa).

Phosphoenolpyruvate is bound at residue 22–23 (KN). Arg-98 contacts UDP-N-acetyl-alpha-D-glucosamine. Cys-122 (proton donor) is an active-site residue. Residue Cys-122 is modified to 2-(S-cysteinyl)pyruvic acid O-phosphothioketal. UDP-N-acetyl-alpha-D-glucosamine is bound by residues 127–131 (RPVDQ), Asp-312, and Ile-334.

It belongs to the EPSP synthase family. MurA subfamily.

The protein resides in the cytoplasm. The enzyme catalyses phosphoenolpyruvate + UDP-N-acetyl-alpha-D-glucosamine = UDP-N-acetyl-3-O-(1-carboxyvinyl)-alpha-D-glucosamine + phosphate. Its pathway is cell wall biogenesis; peptidoglycan biosynthesis. In terms of biological role, cell wall formation. Adds enolpyruvyl to UDP-N-acetylglucosamine. The sequence is that of UDP-N-acetylglucosamine 1-carboxyvinyltransferase from Xanthomonas campestris pv. campestris (strain B100).